The primary structure comprises 279 residues: Tryptophan prenyltransferase ComQ (279 aa).

Mg(2+)-binding residues include Asp67 and Asp71.

It belongs to the FPP/GGPP synthase family. Requires Mg(2+) as cofactor.

The protein localises to the cell membrane. The catalysed reaction is L-tryptophyl-[protein] + (2E)-geranyl diphosphate = (2S,3R)-3-geranyl-2,3-dihydro-2,N(alpha)-cyclo-L-tryptophyl-[protein] + diphosphate. Part of a major quorum-sensing system that regulates the development of genetic competence. Involved in the maturation of the competence pheromone ComX. Acts by catalyzing the transfer of a geranyl group on the ComX pheromone. Cannot use farnesyl diphosphate (FPP). The polypeptide is Tryptophan prenyltransferase ComQ (Bacillus spizizenii (Bacillus subtilis subsp. spizizenii)).